Consider the following 207-residue polypeptide: uncharacterized protein (207 aa).

This is an uncharacterized protein from Rhizobium meliloti (Ensifer meliloti).